Reading from the N-terminus, the 90-residue chain is Putative cytochrome c oxidase subunit 5b-like (90 aa).

The Zn(2+) site is built by Cys-43, Cys-67, and Cys-70.

This sequence belongs to the cytochrome c oxidase subunit 5B (TC 3.D.4.11) family.

This is Putative cytochrome c oxidase subunit 5b-like from Arabidopsis thaliana (Mouse-ear cress).